The primary structure comprises 254 residues: PSME3-interacting protein (254 aa).

Met1 bears the N-acetylmethionine mark. Position 17 is a phosphoserine (Ser17). Positions Asp22–Glu39 are enriched in basic and acidic residues. A disordered region spans residues Asp22–Arg52. The residue at position 139 (Lys139) is an N6-acetyllysine. Positions Gly155–Leu195 are disordered. The span at Leu171 to Gln182 shows a compositional bias: basic and acidic residues. The span at Glu183 to Leu195 shows a compositional bias: polar residues. The interval His201 to Pro254 is interaction with PSME3. Ser222 and Ser228 each carry phosphoserine; by CK2.

In terms of assembly, interacts (via C-terminus) with both free and 20S proteasome-bound forms of the proteasome activator complex subunit PSME3; the interaction is direct. Post-translationally, phosphorylation by CK2 stabilizes the interaction with PSME3.

The protein localises to the nucleus. Functionally, promotes the association of the proteasome activator complex subunit PSME3 with the 20S proteasome and regulates its activity. Inhibits PSME3-mediated degradation of some proteasome substrates, probably by affecting their diffusion rate into the catalytic chamber of the proteasome. Also inhibits the interaction of PSME3 with COIL, inhibits accumulation of PSME3 in Cajal bodies and positively regulates the number of Cajal bodies in the nucleus. The polypeptide is PSME3-interacting protein (Homo sapiens (Human)).